We begin with the raw amino-acid sequence, 231 residues long: Large ribosomal subunit protein uL1 (231 aa).

The protein belongs to the universal ribosomal protein uL1 family. As to quaternary structure, part of the 50S ribosomal subunit.

Its function is as follows. Binds directly to 23S rRNA. The L1 stalk is quite mobile in the ribosome, and is involved in E site tRNA release. Protein L1 is also a translational repressor protein, it controls the translation of the L11 operon by binding to its mRNA. The polypeptide is Large ribosomal subunit protein uL1 (Pseudomonas syringae pv. syringae (strain B728a)).